Reading from the N-terminus, the 218-residue chain is Pyridoxine/pyridoxamine 5'-phosphate oxidase (218 aa).

Residues 66–71, arginine 87, lysine 88, and glutamine 110 each bind FMN; that span reads RVVLLK. Lysine 71 is a substrate binding site. Residues tyrosine 128, arginine 132, and serine 136 each coordinate substrate. Residues 145 to 146 and tryptophan 190 contribute to the FMN site; that span reads QS. 196 to 198 contacts substrate; it reads RLH. An FMN-binding site is contributed by arginine 200.

It belongs to the pyridoxamine 5'-phosphate oxidase family. Homodimer. Requires FMN as cofactor.

It carries out the reaction pyridoxamine 5'-phosphate + O2 + H2O = pyridoxal 5'-phosphate + H2O2 + NH4(+). The catalysed reaction is pyridoxine 5'-phosphate + O2 = pyridoxal 5'-phosphate + H2O2. The protein operates within cofactor metabolism; pyridoxal 5'-phosphate salvage; pyridoxal 5'-phosphate from pyridoxamine 5'-phosphate: step 1/1. It participates in cofactor metabolism; pyridoxal 5'-phosphate salvage; pyridoxal 5'-phosphate from pyridoxine 5'-phosphate: step 1/1. In terms of biological role, catalyzes the oxidation of either pyridoxine 5'-phosphate (PNP) or pyridoxamine 5'-phosphate (PMP) into pyridoxal 5'-phosphate (PLP). This is Pyridoxine/pyridoxamine 5'-phosphate oxidase from Anaplasma marginale (strain St. Maries).